The chain runs to 103 residues: Large ribosomal subunit protein uL24 (103 aa).

This sequence belongs to the universal ribosomal protein uL24 family. Part of the 50S ribosomal subunit.

Its function is as follows. One of two assembly initiator proteins, it binds directly to the 5'-end of the 23S rRNA, where it nucleates assembly of the 50S subunit. Functionally, one of the proteins that surrounds the polypeptide exit tunnel on the outside of the subunit. The sequence is that of Large ribosomal subunit protein uL24 from Haemophilus influenzae (strain PittEE).